Consider the following 488-residue polypeptide: Glutamyl-tRNA(Gln) amidotransferase subunit B, mitochondrial (488 aa).

Belongs to the GatB/GatE family. GatB subfamily. Subunit of the heterotrimeric GatFAB amidotransferase (AdT) complex, composed of A, B and F subunits.

Its subcellular location is the mitochondrion. It carries out the reaction L-glutamyl-tRNA(Gln) + L-glutamine + ATP + H2O = L-glutaminyl-tRNA(Gln) + L-glutamate + ADP + phosphate + H(+). In terms of biological role, allows the formation of correctly charged Gln-tRNA(Gln) through the transamidation of misacylated Glu-tRNA(Gln) in the mitochondria. The reaction takes place in the presence of glutamine and ATP through an activated gamma-phospho-Glu-tRNA(Gln). This Candida albicans (strain SC5314 / ATCC MYA-2876) (Yeast) protein is Glutamyl-tRNA(Gln) amidotransferase subunit B, mitochondrial.